A 563-amino-acid polypeptide reads, in one-letter code: UvrABC system protein C (563 aa).

Positions 12-87 (NKSGVYIFKK…IYKYKPKYNA (76 aa)) constitute a GIY-YIG domain. Positions 194–229 (SNVISFIKLKMEQHARLLDFENAAKYRDILLNFNKV) constitute a UVR domain.

Belongs to the UvrC family. In terms of assembly, interacts with UvrB in an incision complex.

It is found in the cytoplasm. In terms of biological role, the UvrABC repair system catalyzes the recognition and processing of DNA lesions. UvrC both incises the 5' and 3' sides of the lesion. The N-terminal half is responsible for the 3' incision and the C-terminal half is responsible for the 5' incision. This chain is UvrABC system protein C, found in Fervidobacterium nodosum (strain ATCC 35602 / DSM 5306 / Rt17-B1).